Reading from the N-terminus, the 112-residue chain is MNFDMSKLMQQAQKMQEQMKKAQQERENMEVIGESGAGLVTVTMTGKYDVKSVSIDNSLMSEDKEILEDLIAAAVNNAVKKVEENSTASSDIYKMAKDAGIDLPSGINFPFK.

A disordered region spans residues 1–27 (MNFDMSKLMQQAQKMQEQMKKAQQERE). A compositionally biased stretch (basic and acidic residues) spans 17-27 (EQMKKAQQERE).

The protein belongs to the YbaB/EbfC family. In terms of assembly, homodimer.

It localises to the cytoplasm. The protein localises to the nucleoid. Its function is as follows. Binds to DNA and alters its conformation. May be involved in regulation of gene expression, nucleoid organization and DNA protection. The sequence is that of Nucleoid-associated protein FTW_0607 from Francisella tularensis subsp. tularensis (strain WY96-3418).